A 252-amino-acid chain; its full sequence is Acyl-coenzyme A diphosphatase FITM2 (252 aa).

The Cytoplasmic segment spans residues 1 to 25 (MAAAVAGSLVDKLVCLWRQPYTRIY). Residues 26–46 (LPHLFFCISLVGSVLKNAELV) traverse the membrane as a helical segment. Over 47–59 (PESYFSSSRNVLN) the chain is Lumenal. Residues 60-80 (LYFVKVSWGWTIVLLLPFIAY) traverse the membrane as a helical segment. At 81-94 (SNFYIKSHMFALRR) the chain is on the cytoplasmic side. The helical transmembrane segment at 95 to 115 (LTSLLVATLVWYICTETFFYI) threads the bilayer. Topologically, residues 116–156 (EDITGSCYESNTMVVIRGEFDTKAACRKAGFFWDGFDISGH) are lumenal. The active site involves His-156. Residues 157–177 (SFILSYSSLVIMEEMVPMLHI) form a helical membrane-spanning segment. Topologically, residues 178–190 (QPAYRNPPLDCLY) are cytoplasmic. A helical transmembrane segment spans residues 191-211 (LALNVIVAIWIWMFGCTSVYF). The active site involves His-212. Residues 212-223 (HDIIDKILGTSC) lie on the Lumenal side of the membrane. A helical membrane pass occupies residues 224–244 (GILGWYMTYKVWYVKLFSPGL). Topologically, residues 245-252 (PPQPKQHT) are cytoplasmic.

This sequence belongs to the FIT family. FIT2 subfamily. In terms of tissue distribution, widely expressed.

The protein localises to the endoplasmic reticulum membrane. It carries out the reaction an acyl-CoA + H2O = an acyl-4'-phosphopantetheine + adenosine 3',5'-bisphosphate + 2 H(+). Fatty acyl-coenzyme A (CoA) diphosphatase that hydrolyzes fatty acyl-CoA to yield acyl-4'-phosphopantetheine and adenosine 3',5'-bisphosphate. Preferentially hydrolyzes unsaturated long-chain acyl-CoA substrates in the endoplasmic reticulum (ER) lumen. This catalytic activity is required for maintaining ER structure and for lipid droplets (LDs) biogenesis, which are lipid storage organelles involved in maintaining lipid and energy homeostasis. Required for lipid droplet accumulation in liver and intestine during embryogenesis. May directly bind to diacylglycerol (DAGs) and triacylglycerol, which is also important for LD biogenesis. May support directional budding of nacent LDs from the ER into the cytosol by reducing DAG levels at sites of LD formation. May play a role in the regulation of cell morphology, ER morphology and cytoskeletal organization. This Danio rerio (Zebrafish) protein is Acyl-coenzyme A diphosphatase FITM2.